Here is a 218-residue protein sequence, read N- to C-terminus: Nonsense-mediated decay protein 4 (218 aa).

The protein resides in the cytoplasm. Involved in nonsense-mediated decay of mRNAs containing premature stop codons. In Saccharomyces cerevisiae (strain ATCC 204508 / S288c) (Baker's yeast), this protein is Nonsense-mediated decay protein 4 (NMD4).